Here is a 265-residue protein sequence, read N- to C-terminus: MSESALEEVAALSAIYCRDGECEVLSSSVNGITVMIQTGVQGITGSEIHLKLIFDLPVEYPSSLPNISVSSEELTRAQRKDLRDKLVEQAKQHILEPMIHDLVVWTQQNLNNLIVQPEPSILEGHFPLSLDTITEETTWTILLRLDHMRAKSKYVKTVEKWTNDLKLCGRLMFLGKLILILLQGDRKSTRDYLVLQKTCKVDVDSSGKKCKEKMISVLCETILPLKQKRFTTFEVKEYSSVSDLQKEFEAAGLQTIFSEFVQALF.

An RWD domain is found at 7–114; the sequence is EEVAALSAIY…WTQQNLNNLI (108 aa).

It localises to the nucleus. Its subcellular location is the cytoplasm. Functionally, enhancer of SUMO conjugation. Increases SUMO conjugation to proteins by promoting the: binding of E1 and E2 enzymes, thioester linkage between SUMO and ube2i/ubc9 and transfer of SUMO to specific target proteins which include hif1a, pias, nfkbia, nr3c1 and top1. Has no effect on ubiquitination. The polypeptide is RWD domain-containing protein 3 (rwdd3) (Xenopus tropicalis (Western clawed frog)).